The primary structure comprises 444 residues: Orexin receptor type 2 (444 aa).

Basic and acidic residues predominate over residues 1-10 (MSGTKLEDSP). Residues 1–30 (MSGTKLEDSPPCRNWSSAPELNETQEPFLN) form a disordered region. Over 1–54 (MSGTKLEDSPPCRNWSSAPELNETQEPFLNPTDYDDEEFLRYLWREYLHPKEYE) the chain is Extracellular. N-linked (GlcNAc...) asparagine glycans are attached at residues asparagine 14 and asparagine 22. Residues 14 to 27 (NWSSAPELNETQEP) show a composition bias toward polar residues. The segment at 33–49 (DYDDEEFLRYLWREYLH) is required for response to orexin-A. The helical transmembrane segment at 55–75 (WVLIAGYIIVFVVALIGNVLV) threads the bilayer. The Cytoplasmic segment spans residues 76-88 (CVAVWKNHHMRTV). The helical transmembrane segment at 89 to 110 (TNYFIVNLSLADVLVTITCLPA) threads the bilayer. The Extracellular portion of the chain corresponds to 111–127 (TLVVDITETWFFGQSLC). An intrachain disulfide couples cysteine 127 to cysteine 210. The chain crosses the membrane as a helical span at residues 128–150 (KVIPYLQTVSVSVSVLTLSCIAL). Topologically, residues 151–170 (DRWYAICHPLMFKSTAKRAR) are cytoplasmic. The helical transmembrane segment at 171-191 (NSIVIIWIVSCIIMIPQAIVM) threads the bilayer. The Extracellular portion of the chain corresponds to 192 to 222 (ECSTMLPGLANKTTLFTVCDERWGGEIYPKM). N-linked (GlcNAc...) asparagine glycosylation occurs at asparagine 202. Residues 223-243 (YHICFFLVTYMAPLCLMVLAY) form a helical membrane-spanning segment. Topologically, residues 244 to 304 (LQIFRKLWCR…QIRARRKTAR (61 aa)) are cytoplasmic. Residues 305 to 326 (MLMVVLLVFAICYLPISILNVL) traverse the membrane as a helical segment. The Extracellular portion of the chain corresponds to 327–342 (KRVFGMFTHTEDRETV). The chain crosses the membrane as a helical span at residues 343 to 366 (YAWFTFSHWLVYANSAANPIIYNF). Residues 367–444 (LSGKFREEFK…ANGAGQLQNW (78 aa)) are Cytoplasmic-facing.

Belongs to the G-protein coupled receptor 1 family.

The protein resides in the cell membrane. In terms of biological role, nonselective, high-affinity receptor for both orexin-A and orexin-B neuropeptides. Triggers an increase in cytoplasmic Ca(2+) levels in response to orexin-A binding. This is Orexin receptor type 2 (HCRTR2) from Sus scrofa (Pig).